A 336-amino-acid chain; its full sequence is ATP-dependent 6-phosphofructokinase (336 aa).

Glycine 11 lines the ATP pocket. ADP is bound at residue 21 to 25 (RAVVR). Residues 72–73 (RY) and 102–105 (GDGS) each bind ATP. Aspartate 103 contacts Mg(2+). 125-127 (TID) contacts substrate. Aspartate 127 acts as the Proton acceptor in catalysis. Residue arginine 154 participates in ADP binding. Substrate contacts are provided by residues arginine 162 and 169–171 (MGR). Residues 185 to 187 (GAD), lysine 211, and 213 to 215 (KKH) each bind ADP. Substrate contacts are provided by residues glutamate 222, arginine 244, and 250-253 (HIQR).

Belongs to the phosphofructokinase type A (PFKA) family. ATP-dependent PFK group I subfamily. Prokaryotic clade 'B1' sub-subfamily. As to quaternary structure, homotetramer. It depends on Mg(2+) as a cofactor.

Its subcellular location is the cytoplasm. It catalyses the reaction beta-D-fructose 6-phosphate + ATP = beta-D-fructose 1,6-bisphosphate + ADP + H(+). The protein operates within carbohydrate degradation; glycolysis; D-glyceraldehyde 3-phosphate and glycerone phosphate from D-glucose: step 3/4. Its activity is regulated as follows. Allosterically activated by ADP and other diphosphonucleosides, and allosterically inhibited by phosphoenolpyruvate. In terms of biological role, catalyzes the phosphorylation of D-fructose 6-phosphate to fructose 1,6-bisphosphate by ATP, the first committing step of glycolysis. This is ATP-dependent 6-phosphofructokinase from Streptococcus suis (strain 05ZYH33).